The following is a 183-amino-acid chain: Protein Syd (183 aa).

Belongs to the Syd family.

It is found in the cell inner membrane. Functionally, interacts with the SecY protein in vivo. May bind preferentially to an uncomplexed state of SecY, thus functioning either as a chelating agent for excess SecY in the cell or as a regulatory factor that negatively controls the translocase function. This Yersinia enterocolitica serotype O:8 / biotype 1B (strain NCTC 13174 / 8081) protein is Protein Syd.